Consider the following 154-residue polypeptide: MPLPTSLTTLDGTPLAPEVIADKVVLFVNVASKCGLTPQYSGLVALDKAYGEKGLVIIGVPCNQFGAQEPGSPEEIKDFTKTKYDVDFTLLEKQDVNGPNRSPLYQFLVGDGEDISWNFGKFLIGRDGQVVARFDPQTKPDDTNLKAAIEKALG.

C34 is an active-site residue.

It belongs to the glutathione peroxidase family. As to quaternary structure, monomer.

The catalysed reaction is a hydroperoxy polyunsaturated fatty acid + NADPH + H(+) = a hydroxy polyunsaturated fatty acid + NADP(+) + H2O. With respect to regulation, mercaptosuccinate, pCMB, and nethylmaleimide act as inhibitors of the catalytic activity. Hydroperoxy fatty acid reductase essential for the removal of lipid hydroperoxides under normal and stress conditions, leading to the protection of membrane integrity. This Synechocystis sp. (strain ATCC 27184 / PCC 6803 / Kazusa) protein is Hydroperoxy fatty acid reductase Gpx2 (gpx2).